The following is an 823-amino-acid chain: Zygotic DNA replication licensing factor mcm6-A (823 aa).

The segment at 159 to 186 (CLDCQTLVRDVEQQFKYTQPSICRNPVC) adopts a C4-type zinc-finger fold. One can recognise an MCM domain in the interval 347–554 (LYHNLCTSLF…TDYAIARRIV (208 aa)). ATP is bound at residue 397–404 (GDPSTAKS). Residues 529–532 (SRFD) carry the Arginine finger motif. Residues 663–710 (PDVNLDQDDEHEPEDETQEGTNGDAEVPNGVNGHVNGINGHSQESNAA) are disordered. A compositionally biased stretch (acidic residues) spans 667-680 (LDQDDEHEPEDETQ). A compositionally biased stretch (low complexity) spans 691–703 (NGVNGHVNGINGH).

It belongs to the MCM family. In terms of assembly, component of the mcm2-7 complex (RLF-M). The complex forms a toroidal hexameric ring with the proposed subunit order mcm2-mcm6-mcm4-mcm7-mcm3-mcm5 (By simililarity). Begins to associate with zmcm3, mcm4 and mcm7 into mcm complexes at the neurula stage. May replace mmcm6 in the complex that functions during licensing of DNA replication.

It is found in the nucleus. It carries out the reaction ATP + H2O = ADP + phosphate + H(+). Acts as a component of the mcm2-7 complex (mcm complex) which is the putative replicative helicase essential for 'once per cell cycle' DNA replication initiation and elongation in eukaryotic cells. The active ATPase sites in the mcm2-7 ring are formed through the interaction surfaces of two neighboring subunits such that a critical structure of a conserved arginine finger motif is provided in trans relative to the ATP-binding site of the Walker A box of the adjacent subunit. The six ATPase active sites, however, are likely to contribute differentially to the complex helicase activity. The existence of maternal and zygotic forms of mcm3 and mcm6 suggests that specific forms of mcm2-7 complexes may be used during different stages of development. May replace mmcm6 in the mcm2-7 complex. The protein is Zygotic DNA replication licensing factor mcm6-A (zmcm6-a) of Xenopus laevis (African clawed frog).